A 516-amino-acid polypeptide reads, in one-letter code: GMP synthase [glutamine-hydrolyzing] (516 aa).

One can recognise a Glutamine amidotransferase type-1 domain in the interval 6–198; it reads KVIIVDYGSQ…LFKIAGIKAD (193 aa). Catalysis depends on cysteine 83, which acts as the Nucleophile. Catalysis depends on residues histidine 172 and glutamate 174. Positions 199 to 391 constitute a GMPS ATP-PPase domain; sequence WSMSSFCERV…LGLPDFIVWR (193 aa). An ATP-binding site is contributed by 227 to 233; the sequence is SGGIDST.

As to quaternary structure, homodimer.

The catalysed reaction is XMP + L-glutamine + ATP + H2O = GMP + L-glutamate + AMP + diphosphate + 2 H(+). It functions in the pathway purine metabolism; GMP biosynthesis; GMP from XMP (L-Gln route): step 1/1. Catalyzes the synthesis of GMP from XMP. The chain is GMP synthase [glutamine-hydrolyzing] from Oleidesulfovibrio alaskensis (strain ATCC BAA-1058 / DSM 17464 / G20) (Desulfovibrio alaskensis).